A 196-amino-acid chain; its full sequence is SPRY domain-containing protein 7 (196 aa).

A2 is modified (N-acetylalanine). A B30.2/SPRY domain is found at 2-184; the sequence is AASVFCCLRC…FSEFYHTPPP (183 aa).

The sequence is that of SPRY domain-containing protein 7 (SPRYD7) from Bos taurus (Bovine).